The sequence spans 1027 residues: MDFSIVKTQILNNRRTFRTPFKVSSMCFSSQNDLIALGSKTGEILLKRTSWKMIWKTNINMIQAVGTECKLDSSVSALHFSPDGRFLAAATSKGIIHLLDVETGKVRFSVKAASEKIAKLHWNCVREKPFISNLGEFTTRIKNVEAIEGAIELAETTPNISQEEIAFVYQRLDEDGSSFKHEDAHKESLERTLISTETFRESLQNTILLATDDMDSKIIVLVAGVFPYMEIDISDTLLQYNQSLLMLYDMHYSSAFGGVSFLATTYGPFLDCKQNELKPPGAEPKKDGQGCHTLLFNVKLNINSSLWDTALRYIRLLFGFNLYSISLETTKRNWEEQIDNLHSLFDTKTKAVKIGNVLLEMLLSGSTDAAGEAFLERGLGTDGLDKIELFATKHMPEVCRIARGQLSTSARNLCFQRCEFSTSLSRYAKFIQLKDDDSFLYDEDPPAYLSESNIWLNTLEEKINILDMKTRHLGIQCLTMMQELGHLVKWISMTKPFAKTMKVNALMKIKRMNIAKILLYIVRNFIPDPEAVKDIENRLFNLKELVSKQKKKDLEDKFDEVEYLYRLERIAEVERKKLIETFHEKFRFADLDDDDLTPLLFQELDHPIDIFTDSMMEQNDSSPFLEEDEGEPEQEEQKPDEEPEPEGEPQPACDLDRVGSFFEKELSQKALEVLPKCDETFDCVLNERGSRMNSIEIQKMGILRVLEDLAATLSSPQKIHCDKAGNQKKLEVSFIYEITSTPTHQGYQDAKISSVTPSYYKRHPFNQLSGMGRSIQVSVLQKNEFSSIVIVPTSDVLPEDENEVNDHVEKLKRCYEFEKIDVTVDKSSAENRPPGETDAMEVDSNELRIDVDLGPVVPEYDTLIELSQVHPLHHGELVLLGKFTSAQEGTGVMSQMMRSISSYPHEIPEDKDVFAKNSSEDGSSEIPIETLIIHPTIQLAAYLHDDGSKITIGDMKPEVPPIADYEEKTVRKTFRDYQRRRERYREDMGVMNMNDVQYDVLVQEAMDSGRDLTDNGESDEDEEDDDI.

WD repeat units lie at residues 18 to 65 (RTPF…IQAV) and 70 to 109 (KLDSSVSALHFSPDGRFLAAATSKGIIHLLDVETGKVRFS). 2 disordered regions span residues 619–655 (NDSSPFLEEDEGEPEQEEQKPDEEPEPEGEPQPACDL) and 1005–1027 (AMDSGRDLTDNGESDEDEEDDDI). Composition is skewed to acidic residues over residues 625–647 (LEEDEGEPEQEEQKPDEEPEPEG) and 1014–1027 (DNGESDEDEEDDDI).

Belongs to the APC4 family. As to quaternary structure, the APC/C is probably composed of at least 12 subunits: apc-2, apc-10, apc-11, cdc-26, emb-1, emb-27, emb-30, mat-1, mat-2, mat-3, such-1 and gfi-3.

It participates in protein modification; protein ubiquitination. In terms of biological role, probable component of the anaphase promoting complex/cyclosome (APC/C), a cell cycle-regulated E3 ubiquitin ligase that controls progression through mitosis and the G1 phase of the cell cycle. The APC/C complex acts by mediating ubiquitination and subsequent degradation of target proteins. Developmental role in early embryogenesis and the metaphase to anaphase transition in oocyte and spermatocyte meiosis and mitosis in somatic and germ cells. Required for embryonic anterior-posterior axis formation. Negatively regulates ify-1 protein levels during meiosis I. Plays a role in regulating the abundance of glr-1 receptors in postmitotic neurons, which may in turn control animal locomotion. Involved in regulating GABA neurotransmitter release at neuromuscular junctions in GABA motor neurons. The protein is Abnormal embryogenesis protein 30 of Caenorhabditis elegans.